The sequence spans 419 residues: MSDLIQKAQKVKEASKKLMNLSESQKNLALSCISKKILDNMEYILVENKKDMENAQNKGIKGALLDRLKLTEDRIRQICKGIEDVIKLPDPVGEVISMWKRPNGLIIGQKRVPIGAIGIIYEARPNVTVDAAVLCLKAGNSVLLRGGSEAINSNVALVKTMKEGLIEAGIDEGSIEIVEDTSRETAVAMMKLNEYLDLLIPRGGANLIKTVVQNATVPVIETGVGNCHVFVDESADFEMAEKIVINAKTQRPGVCNAAEKLLVHKNIAESFLPMIVKKLMTKGVEIRGCSKTVEICKQNGIEVKEATEDDWYTEYLDLIIGVKVVDSIDAAIEHINKYGSKHSEAIVTRDYFNAQKFLDFVDAAACYVNASTRFTDGFEFGFGAEIGISTQKLHARGPMGLKELTTIKYIILGSGQVRE.

The protein belongs to the gamma-glutamyl phosphate reductase family.

The protein localises to the cytoplasm. The enzyme catalyses L-glutamate 5-semialdehyde + phosphate + NADP(+) = L-glutamyl 5-phosphate + NADPH + H(+). The protein operates within amino-acid biosynthesis; L-proline biosynthesis; L-glutamate 5-semialdehyde from L-glutamate: step 2/2. Its function is as follows. Catalyzes the NADPH-dependent reduction of L-glutamate 5-phosphate into L-glutamate 5-semialdehyde and phosphate. The product spontaneously undergoes cyclization to form 1-pyrroline-5-carboxylate. This chain is Gamma-glutamyl phosphate reductase, found in Caldicellulosiruptor saccharolyticus (strain ATCC 43494 / DSM 8903 / Tp8T 6331).